Here is a 337-residue protein sequence, read N- to C-terminus: Ketol-acid reductoisomerase (NADP(+)) (337 aa).

Residues 3–183 (VEMFYDADAD…GGARAGVIKT (181 aa)) form the KARI N-terminal Rossmann domain. Residues 26–29 (YGSQ), Lys49, Ser52, Ser54, and 84–87 (DTAQ) contribute to the NADP(+) site. The active site involves His109. Gly135 contributes to the NADP(+) binding site. The 146-residue stretch at 184-329 (TFKDETETDL…KKLRDLMSWV (146 aa)) folds into the KARI C-terminal knotted domain. Mg(2+) contacts are provided by Asp192, Glu196, Glu228, and Glu232. Substrate is bound at residue Ser253.

It belongs to the ketol-acid reductoisomerase family. Requires Mg(2+) as cofactor.

It carries out the reaction (2R)-2,3-dihydroxy-3-methylbutanoate + NADP(+) = (2S)-2-acetolactate + NADPH + H(+). The catalysed reaction is (2R,3R)-2,3-dihydroxy-3-methylpentanoate + NADP(+) = (S)-2-ethyl-2-hydroxy-3-oxobutanoate + NADPH + H(+). It participates in amino-acid biosynthesis; L-isoleucine biosynthesis; L-isoleucine from 2-oxobutanoate: step 2/4. It functions in the pathway amino-acid biosynthesis; L-valine biosynthesis; L-valine from pyruvate: step 2/4. In terms of biological role, involved in the biosynthesis of branched-chain amino acids (BCAA). Catalyzes an alkyl-migration followed by a ketol-acid reduction of (S)-2-acetolactate (S2AL) to yield (R)-2,3-dihydroxy-isovalerate. In the isomerase reaction, S2AL is rearranged via a Mg-dependent methyl migration to produce 3-hydroxy-3-methyl-2-ketobutyrate (HMKB). In the reductase reaction, this 2-ketoacid undergoes a metal-dependent reduction by NADPH to yield (R)-2,3-dihydroxy-isovalerate. This Mycolicibacterium gilvum (strain PYR-GCK) (Mycobacterium gilvum (strain PYR-GCK)) protein is Ketol-acid reductoisomerase (NADP(+)).